Here is a 182-residue protein sequence, read N- to C-terminus: Large ribosomal subunit protein uL5 (182 aa).

This sequence belongs to the universal ribosomal protein uL5 family. In terms of assembly, part of the 50S ribosomal subunit; part of the 5S rRNA/L5/L18/L25 subcomplex. Contacts the 5S rRNA and the P site tRNA. Forms a bridge to the 30S subunit in the 70S ribosome.

This is one of the proteins that bind and probably mediate the attachment of the 5S RNA into the large ribosomal subunit, where it forms part of the central protuberance. In the 70S ribosome it contacts protein S13 of the 30S subunit (bridge B1b), connecting the 2 subunits; this bridge is implicated in subunit movement. Contacts the P site tRNA; the 5S rRNA and some of its associated proteins might help stabilize positioning of ribosome-bound tRNAs. This Borrelia duttonii (strain Ly) protein is Large ribosomal subunit protein uL5.